A 651-amino-acid polypeptide reads, in one-letter code: Protein SCARECROW 1 (651 aa).

Disordered regions lie at residues 1 to 33 (MGSSSLLLFPSSSSSATHSSYSPSSSSHAITSL) and 188 to 277 (SDPA…KQRD). The segment covering 190 to 228 (PAPPPPPPPSHPALLPPDATAPPPPPTSVAALPPPPPPQ) has biased composition (pro residues). Residues 253 to 280 (TAEETAAAAAAAKERKEEQRRKQRDEEG) adopt a coiled-coil conformation. Residues 254–263 (AEETAAAAAA) show a composition bias toward low complexity. A compositionally biased stretch (basic and acidic residues) spans 264 to 277 (AKERKEEQRRKQRD). The 371-residue stretch at 274-644 (KQRDEEGLHL…LCLLTASAWR (371 aa)) folds into the GRAS domain. The interval 281-345 (LHLLTLLLQC…VSSCLGLYAP (65 aa)) is leucine repeat I (LRI). The short motif at 288–292 (LQCAE) is the LxCxE motif element. Residues 364-429 (FQVFNGISPF…GGPPRVRLTG (66 aa)) form a VHIID region. The short motif at 395-399 (VHIID) is the VHIID element. The leucine repeat II (LRII) stretch occupies residues 439 to 471 (ATGKRLSDFADTLGLPFEFCPVADKAGNLDPEK). The PFYRE stretch occupies residues 480 to 567 (VAVHWLRHSL…QQLLSREIRN (88 aa)). The interval 570–644 (AVGGPARTGD…LCLLTASAWR (75 aa)) is SAW.

It belongs to the GRAS family. In terms of assembly, interacts with SHR1, but not with SHR2. As to expression, expressed in the initial daughter cell before its asymmetric division and remains expressed in the endodermal cell layer after the division.

It localises to the nucleus. Functionally, transcription factor required for quiescent center cells specification and maintenance of surrounding stem cells, and for the asymmetric cell division involved in radial pattern formation in roots. Essential for cell division but not differentiation of the ground tissue. Regulates the radial organization of the shoot axial organs. Restricts SHR movment and sequesters it into the nucleus of the endodermis. The chain is Protein SCARECROW 1 (SCR1) from Oryza sativa subsp. japonica (Rice).